The primary structure comprises 297 residues: Ribosomal RNA small subunit methyltransferase A (297 aa).

Residues Asn-31, Leu-33, Gly-58, Glu-79, Asp-104, and Asn-129 each contribute to the S-adenosyl-L-methionine site.

This sequence belongs to the class I-like SAM-binding methyltransferase superfamily. rRNA adenine N(6)-methyltransferase family. RsmA subfamily.

It is found in the cytoplasm. It carries out the reaction adenosine(1518)/adenosine(1519) in 16S rRNA + 4 S-adenosyl-L-methionine = N(6)-dimethyladenosine(1518)/N(6)-dimethyladenosine(1519) in 16S rRNA + 4 S-adenosyl-L-homocysteine + 4 H(+). Its function is as follows. Specifically dimethylates two adjacent adenosines (A1518 and A1519) in the loop of a conserved hairpin near the 3'-end of 16S rRNA in the 30S particle. May play a critical role in biogenesis of 30S subunits. The sequence is that of Ribosomal RNA small subunit methyltransferase A from Staphylococcus aureus (strain MRSA252).